A 429-amino-acid polypeptide reads, in one-letter code: MTNMSWSFLTRLLEEIHNHSTFVGKVWLTVLVVFRIVLTAVGGESIYSDEQTKFTCNTRQPGCDNVCYDAFAPLSHVRFWVFQIVVISTPSVMYLGYAVHRLARASQDERRRASRRRPSRRAPRPPLPLPPPPHPGWPEPADLGEEEPMLGLGEEDEDPGVAEGLGEDEEAEDTGAAKGAGGDTKVAGVPGPAGQHDGRRRIQREGLMRVYVAQLVARAAFEVAFLVGQYLLYGFEVRPFFACSRQPCPHVVDCFVSRPTEKTVFLLVMYVVSCLCLLLNLCEMAHLGLGNAQDAVRGRRPLPASPGPMPRPPPCALPAAPSGLACPPDYSLVVRTAEHARAQDQELASLALQALQDRRALGDLDSPPGPGLPANARGPPKPGAPASGSGSATSGGTVGGQGRQGIKPRMGSEKGSGSSSREGKTTVWI.

The Cytoplasmic segment spans residues 1–25; that stretch reads MTNMSWSFLTRLLEEIHNHSTFVGK. A helical membrane pass occupies residues 26–46; sequence VWLTVLVVFRIVLTAVGGESI. Topologically, residues 47–78 are extracellular; the sequence is YSDEQTKFTCNTRQPGCDNVCYDAFAPLSHVR. Residues 79–99 form a helical membrane-spanning segment; sequence FWVFQIVVISTPSVMYLGYAV. Residues 100-214 lie on the Cytoplasmic side of the membrane; the sequence is HRLARASQDE…EGLMRVYVAQ (115 aa). Residues 106–200 are disordered; the sequence is SQDERRRASR…GPAGQHDGRR (95 aa). A compositionally biased stretch (basic residues) spans 112–123; it reads RASRRRPSRRAP. Pro residues predominate over residues 124–138; the sequence is RPPLPLPPPPHPGWP. The span at 142–173 shows a compositional bias: acidic residues; that stretch reads DLGEEEPMLGLGEEDEDPGVAEGLGEDEEAED. The chain crosses the membrane as a helical span at residues 215–235; that stretch reads LVARAAFEVAFLVGQYLLYGF. Residues 236-263 are Extracellular-facing; that stretch reads EVRPFFACSRQPCPHVVDCFVSRPTEKT. A helical transmembrane segment spans residues 264–284; the sequence is VFLLVMYVVSCLCLLLNLCEM. The Cytoplasmic portion of the chain corresponds to 285–429; the sequence is AHLGLGNAQD…SREGKTTVWI (145 aa). Disordered stretches follow at residues 296–316 and 361–429; these read VRGR…PPCA and LGDL…TVWI. Pro residues predominate over residues 303 to 316; that stretch reads PASPGPMPRPPPCA. The residue at position 366 (Ser-366) is a Phosphoserine. Positions 372 to 395 are enriched in low complexity; sequence LPANARGPPKPGAPASGSGSATSG.

The protein belongs to the connexin family. Gamma-type subfamily. A connexon is composed of a hexamer of connexins. Interacts with TJP1.

It localises to the cell membrane. It is found in the cell junction. The protein localises to the gap junction. Its function is as follows. One gap junction consists of a cluster of closely packed pairs of transmembrane channels, the connexons, through which materials of low MW diffuse from one cell to a neighboring cell. May play a role in myelination in central and peripheral nervous systems. In Bos taurus (Bovine), this protein is Gap junction gamma-2 protein (GJC2).